A 177-amino-acid polypeptide reads, in one-letter code: GTP-dependent dephospho-CoA kinase (177 aa).

6 residues coordinate GTP: aspartate 48, valine 49, valine 50, aspartate 67, lysine 69, and glutamate 124.

The protein belongs to the GTP-dependent DPCK family.

The catalysed reaction is 3'-dephospho-CoA + GTP = GDP + CoA + H(+). It participates in cofactor biosynthesis; coenzyme A biosynthesis. Its function is as follows. Catalyzes the GTP-dependent phosphorylation of the 3'-hydroxyl group of dephosphocoenzyme A to form coenzyme A (CoA). This Pyrococcus furiosus (strain ATCC 43587 / DSM 3638 / JCM 8422 / Vc1) protein is GTP-dependent dephospho-CoA kinase.